The chain runs to 374 residues: Peroxisome biogenesis factor 10 (374 aa).

Polar residues-rich tracts occupy residues 1–11 (MSNVQSQSNSH) and 18–31 (VNRS…QQIR). Residues 1 to 82 (MSNVQSQSNS…NSNLYPSYAD (82 aa)) are Peroxisomal matrix-facing. The disordered stretch occupies residues 1 to 82 (MSNVQSQSNS…NSNLYPSYAD (82 aa)). The span at 35–76 (PTNNNNNNNNNSINNINNNTQRQPLNNNNNNNNNINRNNSNL) shows a compositional bias: low complexity. A helical membrane pass occupies residues 83–112 (QPDILRSSQKDEYYKKLFEDQCFEMLTRIT). A topological domain (cytoplasmic) is located at residue glycine 113. Residues 114-135 (PRFIMNRQSESKLLANTIYYLL) traverse the membrane as a helical segment. The Peroxisomal matrix segment spans residues 136–165 (TTMIGSQTLGEEYCNLRKIKDKTFSIPSIP). A helical transmembrane segment spans residues 166 to 181 (DRIKLYFFHLLAPYLI). Topologically, residues 182–192 (KKSLPKLFQRH) are cytoplasmic. A helical transmembrane segment spans residues 193–216 (PKLYILKEIFPKFERLHLALFYFN). The Peroxisomal matrix portion of the chain corresponds to 217-243 (GSYFEFSKRLSDIRYIFNRKIDQKRPK). Residues 244–263 (YDILGLLIIIQILLSTFMYL) form a helical membrane-spanning segment. The Cytoplasmic segment spans residues 264–374 (KENSFFLKQQ…IRTCVPLYNY (111 aa)). Positions 322, 325, 337, 339, 342, 345, 356, and 359 each coordinate Zn(2+). Residues 322–360 (CTLCLEVRTHTTATICGHLFCWHCITEWCNNKEQCPVCR) form an RING-type zinc finger.

It belongs to the pex2/pex10/pex12 family. In terms of assembly, component of the PEX2-PEX10-PEX12 retrotranslocation channel.

It localises to the peroxisome membrane. It catalyses the reaction S-ubiquitinyl-[E2 ubiquitin-conjugating enzyme]-L-cysteine + [acceptor protein]-L-lysine = [E2 ubiquitin-conjugating enzyme]-L-cysteine + N(6)-ubiquitinyl-[acceptor protein]-L-lysine.. It functions in the pathway protein modification; protein ubiquitination. Its activity is regulated as follows. The E3 ubiquitin-protein ligase activity is stimulated by PEX12. Its function is as follows. E3 ubiquitin-protein ligase component of a retrotranslocation channel required for peroxisome organization by mediating export of the PEX5 receptor from peroxisomes to the cytosol, thereby promoting PEX5 recycling. The retrotranslocation channel is composed of PEX2, PEX10 and PEX12; each subunit contributing transmembrane segments that coassemble into an open channel that specifically allows the passage of PEX5 through the peroxisomal membrane. PEX10 also regulates PEX5 recycling by acting as a E3 ubiquitin-protein ligase. When PEX5 recycling is compromised, PEX10 catalyzes polyubiquitination of PEX5 during its passage through the retrotranslocation channel, leading to its degradation. This is Peroxisome biogenesis factor 10 (pex10) from Dictyostelium discoideum (Social amoeba).